The primary structure comprises 324 residues: tRNA dimethylallyltransferase (324 aa).

17–24 (GPTASGKT) serves as a coordination point for ATP. A substrate-binding site is contributed by 19–24 (TASGKT). Interaction with substrate tRNA regions lie at residues 42-45 (DSAL), 166-170 (QRIQR), 251-256 (RCVGYR), and 284-291 (KRQITWLR).

The protein belongs to the IPP transferase family. Monomer. The cofactor is Mg(2+).

The catalysed reaction is adenosine(37) in tRNA + dimethylallyl diphosphate = N(6)-dimethylallyladenosine(37) in tRNA + diphosphate. Catalyzes the transfer of a dimethylallyl group onto the adenine at position 37 in tRNAs that read codons beginning with uridine, leading to the formation of N6-(dimethylallyl)adenosine (i(6)A). This chain is tRNA dimethylallyltransferase, found in Burkholderia ambifaria (strain MC40-6).